The chain runs to 510 residues: GMP synthase [glutamine-hydrolyzing] (510 aa).

Residues Leu5 to Asp195 form the Glutamine amidotransferase type-1 domain. Cys82 functions as the Nucleophile in the catalytic mechanism. Active-site residues include His169 and Glu171. Residues Trp196–Arg385 enclose the GMPS ATP-PPase domain. Position 223–229 (Ser223–Ser229) interacts with ATP.

Homodimer.

It carries out the reaction XMP + L-glutamine + ATP + H2O = GMP + L-glutamate + AMP + diphosphate + 2 H(+). Its pathway is purine metabolism; GMP biosynthesis; GMP from XMP (L-Gln route): step 1/1. In terms of biological role, catalyzes the synthesis of GMP from XMP. In Finegoldia magna (strain ATCC 29328 / DSM 20472 / WAL 2508) (Peptostreptococcus magnus), this protein is GMP synthase [glutamine-hydrolyzing].